Consider the following 187-residue polypeptide: Tumor necrosis factor ligand superfamily member 4 (187 aa).

The Cytoplasmic segment spans residues methionine 1–lysine 23. A helical; Signal-anchor for type II membrane protein transmembrane segment spans residues leucine 24–cysteine 44. Residues glutamine 45–proline 187 are Extracellular-facing. Positions proline 58 to isoleucine 177 constitute a THD domain. Intrachain disulfides connect cysteine 74–cysteine 164 and cysteine 101–cysteine 185. N-linked (GlcNAc...) asparagine glycans are attached at residues asparagine 94 and asparagine 156.

It belongs to the tumor necrosis factor family. Homotrimer.

Its subcellular location is the membrane. Cytokine that binds to TNFRSF4. Co-stimulates T-cell proliferation and cytokine production. The polypeptide is Tumor necrosis factor ligand superfamily member 4 (TNFSF4) (Oryctolagus cuniculus (Rabbit)).